The sequence spans 392 residues: Galactokinase (392 aa).

A substrate-binding site is contributed by 40–43; that stretch reads EHID. ATP contacts are provided by residues Ser74 and 128–134; that span reads GSGLSSS. Mg(2+) is bound by residues Ser134 and Glu167. The active-site Proton acceptor is the Asp179. Tyr229 contributes to the substrate binding site.

The protein belongs to the GHMP kinase family. GalK subfamily.

The protein localises to the cytoplasm. The enzyme catalyses alpha-D-galactose + ATP = alpha-D-galactose 1-phosphate + ADP + H(+). It participates in carbohydrate metabolism; galactose metabolism. Functionally, catalyzes the transfer of the gamma-phosphate of ATP to D-galactose to form alpha-D-galactose-1-phosphate (Gal-1-P). This Clostridium tetani (strain Massachusetts / E88) protein is Galactokinase.